The following is an 88-amino-acid chain: Small ribosomal subunit protein uS19 (88 aa).

This sequence belongs to the universal ribosomal protein uS19 family.

Its function is as follows. Protein S19 forms a complex with S13 that binds strongly to the 16S ribosomal RNA. The protein is Small ribosomal subunit protein uS19 of Chlamydia caviae (strain ATCC VR-813 / DSM 19441 / 03DC25 / GPIC) (Chlamydophila caviae).